The chain runs to 194 residues: Putative 3-methyladenine DNA glycosylase (194 aa).

This sequence belongs to the DNA glycosylase MPG family.

This chain is Putative 3-methyladenine DNA glycosylase, found in Chlamydia felis (strain Fe/C-56) (Chlamydophila felis).